Reading from the N-terminus, the 143-residue chain is Type II secretion system core protein G (143 aa).

Residues 1–8 constitute a propeptide, leader sequence; that stretch reads MQKRRQSG. Residue F9 is modified to N-methylphenylalanine. Residues 9–29 traverse the membrane as a helical segment; that stretch reads FTLLEVMVVIVILGILASLVV. The disordered stretch occupies residues 70 to 92; it reads QGLDALVNKPTAAPEPRSYRDGG.

The protein belongs to the GSP G family. Type II secretion system is composed of four main components: the outer membrane complex, the inner membrane complex, the cytoplasmic secretion ATPase and the periplasm-spanning pseudopilus. Forms homomultimers. Cleaved by the prepilin peptidase. In terms of processing, methylated by prepilin peptidase at the amino group of the N-terminal phenylalanine once the leader sequence is cleaved.

It localises to the cell inner membrane. Core component of the type II secretion system required for the energy-dependent secretion of extracellular factors such as proteases and toxins from the periplasm. Pseudopilin (pilin-like) protein that polymerizes to form the pseudopilus. Further polymerization triggers pseudopilus growth. The sequence is that of Type II secretion system core protein G (exeG) from Aeromonas hydrophila.